Reading from the N-terminus, the 329-residue chain is DNA-directed RNA polymerase subunit alpha (329 aa).

The segment at Met1 to Glu231 is alpha N-terminal domain (alpha-NTD). The tract at residues Phe249–Arg329 is alpha C-terminal domain (alpha-CTD).

This sequence belongs to the RNA polymerase alpha chain family. In terms of assembly, homodimer. The RNAP catalytic core consists of 2 alpha, 1 beta, 1 beta' and 1 omega subunit. When a sigma factor is associated with the core the holoenzyme is formed, which can initiate transcription.

The catalysed reaction is RNA(n) + a ribonucleoside 5'-triphosphate = RNA(n+1) + diphosphate. Functionally, DNA-dependent RNA polymerase catalyzes the transcription of DNA into RNA using the four ribonucleoside triphosphates as substrates. This Albidiferax ferrireducens (strain ATCC BAA-621 / DSM 15236 / T118) (Rhodoferax ferrireducens) protein is DNA-directed RNA polymerase subunit alpha.